We begin with the raw amino-acid sequence, 435 residues long: D-inositol 3-phosphate glycosyltransferase (435 aa).

Residue H16 coordinates 1D-myo-inositol 3-phosphate. UDP-N-acetyl-alpha-D-glucosamine-binding positions include 22 to 23 (QP) and G30. Residues 27 to 32 (DAGGMN), K85, Y118, T142, and R162 contribute to the 1D-myo-inositol 3-phosphate site. UDP-N-acetyl-alpha-D-glucosamine contacts are provided by R237, K242, and V303. Positions 312, 313, and 315 each coordinate Mg(2+). Positions 325 and 333 each coordinate UDP-N-acetyl-alpha-D-glucosamine. Mg(2+) is bound at residue T339.

Belongs to the glycosyltransferase group 1 family. MshA subfamily. In terms of assembly, homodimer.

It carries out the reaction 1D-myo-inositol 3-phosphate + UDP-N-acetyl-alpha-D-glucosamine = 1D-myo-inositol 2-acetamido-2-deoxy-alpha-D-glucopyranoside 3-phosphate + UDP + H(+). Its function is as follows. Catalyzes the transfer of a N-acetyl-glucosamine moiety to 1D-myo-inositol 3-phosphate to produce 1D-myo-inositol 2-acetamido-2-deoxy-glucopyranoside 3-phosphate in the mycothiol biosynthesis pathway. This is D-inositol 3-phosphate glycosyltransferase from Kineococcus radiotolerans (strain ATCC BAA-149 / DSM 14245 / SRS30216).